The chain runs to 336 residues: MAKVYYEKDVTVNVLKEKKVAIIGYGSQGHAHAQNLRDNGFDVVVGLRKGKSWDKANEDGFSVYTVAEAAEKADVVMILLPDELQPEVYEAEIAPNLQAGNSLVFAHGFNVHFDQVKPPANVDVFLVAPKGPGHLVRRTFAEGGAVPALFAVYQDATGVATEKALSYADGIGATRAGVLETTFKEETETDLFGEQAVLCGGVTALVKAGFETLVDAGYQPELAYFECLHELKLIVDLMYEGGLENMRYSVSDTAQWGDFVSGPRVVTEDTKKAMGAVLAEIQDGTFARGWIAEHKAGRPNFHATNEKENKHEIEVVGRKLREMMPFVQPRVKVGVK.

The 180-residue stretch at 2–181 (AKVYYEKDVT…GATRAGVLET (180 aa)) folds into the KARI N-terminal Rossmann domain. Residues 25-28 (YGSQ), arginine 48, serine 52, and 82-85 (DELQ) contribute to the NADP(+) site. The active site involves histidine 107. Glycine 133 contributes to the NADP(+) binding site. The KARI C-terminal knotted domain occupies 182–327 (TFKEETETDL…RKLREMMPFV (146 aa)). Mg(2+)-binding residues include aspartate 190, glutamate 194, glutamate 226, and glutamate 230. Serine 251 provides a ligand contact to substrate.

Belongs to the ketol-acid reductoisomerase family. Requires Mg(2+) as cofactor.

The enzyme catalyses (2R)-2,3-dihydroxy-3-methylbutanoate + NADP(+) = (2S)-2-acetolactate + NADPH + H(+). It catalyses the reaction (2R,3R)-2,3-dihydroxy-3-methylpentanoate + NADP(+) = (S)-2-ethyl-2-hydroxy-3-oxobutanoate + NADPH + H(+). Its pathway is amino-acid biosynthesis; L-isoleucine biosynthesis; L-isoleucine from 2-oxobutanoate: step 2/4. It functions in the pathway amino-acid biosynthesis; L-valine biosynthesis; L-valine from pyruvate: step 2/4. Its function is as follows. Involved in the biosynthesis of branched-chain amino acids (BCAA). Catalyzes an alkyl-migration followed by a ketol-acid reduction of (S)-2-acetolactate (S2AL) to yield (R)-2,3-dihydroxy-isovalerate. In the isomerase reaction, S2AL is rearranged via a Mg-dependent methyl migration to produce 3-hydroxy-3-methyl-2-ketobutyrate (HMKB). In the reductase reaction, this 2-ketoacid undergoes a metal-dependent reduction by NADPH to yield (R)-2,3-dihydroxy-isovalerate. The chain is Ketol-acid reductoisomerase (NADP(+)) 1 from Bacillus cereus (strain ATCC 14579 / DSM 31 / CCUG 7414 / JCM 2152 / NBRC 15305 / NCIMB 9373 / NCTC 2599 / NRRL B-3711).